We begin with the raw amino-acid sequence, 492 residues long: DEAD-box ATP-dependent RNA helicase RhpA (492 aa).

Residues 20–48 (PSFNDLGLKESVLKSVYEAGFTSPSPIQE) carry the Q motif motif. Residues 51-220 (IPAVLQGRDV…DKILENPIKI (170 aa)) enclose the Helicase ATP-binding domain. ATP is bound at residue 64 to 71 (AQTGTGKT). Positions 168–171 (DESD) match the DEAD box motif. The Helicase C-terminal domain maps to 231 to 393 (DITQRFYVIN…EIPTINENQI (163 aa)). Residues 445–492 (AIQNPKEKTPKPSHKKTPQHERARSFKKGQHRDRHPKTNHHSKKPKRR) form a disordered region. The span at 469 to 492 (SFKKGQHRDRHPKTNHHSKKPKRR) shows a compositional bias: basic residues.

It belongs to the DEAD box helicase family. Homodimer. Interacts with RNase J (rnj), might be a member of a minimal RNA degradosome complex.

The protein resides in the cytoplasm. It catalyses the reaction ATP + H2O = ADP + phosphate + H(+). Its function is as follows. DEAD-box RNA helicase probably involved in RNA degradation. Unwinds dsRNA in both 5'- and 3'-directions. Background RNA-dependent ATPase activity is stimulated about 5-fold by RNaseJ (rnj). Stimulates the dsRNase activity of RNase J. This Helicobacter pylori (strain B128) protein is DEAD-box ATP-dependent RNA helicase RhpA (rhpA).